Consider the following 63-residue polypeptide: Large ribosomal subunit protein eL37 (63 aa).

Zn(2+) is bound by residues Cys20, Cys23, Cys35, and Cys38. A C4-type zinc finger spans residues Cys20–Cys38.

It belongs to the eukaryotic ribosomal protein eL37 family. As to quaternary structure, part of the 50S ribosomal subunit. The cofactor is Zn(2+).

Its function is as follows. Binds to the 23S rRNA. This Thermococcus kodakarensis (strain ATCC BAA-918 / JCM 12380 / KOD1) (Pyrococcus kodakaraensis (strain KOD1)) protein is Large ribosomal subunit protein eL37.